The following is a 125-amino-acid chain: Natriuretic peptide GNP1 (125 aa).

Residues 1–25 form the signal peptide; the sequence is MDPRLVRAGSLVLLLALLVQDQGAA. Disordered regions lie at residues 23 to 78 and 105 to 125; these read GAAH…PAFK and VSGM…TGKK. Positions 26-85 are excised as a propeptide; sequence HPARAGQKYKPLIRRSEEDSQALGQEGDVAARAADEEEDAAGPGDALRQPAFKTLLASRE. Residues C94 and C110 are joined by a disulfide bond.

The protein belongs to the natriuretic peptide family. Expressed by the venom gland.

The protein resides in the secreted. Exhibits natriuretic and vasodepressor activity. Acts by stimulating cGMP. The polypeptide is Natriuretic peptide GNP1 (Varanus varius (Lace monitor lizard)).